The sequence spans 187 residues: Putative manganese efflux pump MntP (187 aa).

The next 6 helical transmembrane spans lie at 8-28, 39-59, 65-85, 106-126, 131-151, and 166-186; these read FLSIGLAIDAFAVSLSSGFII, IALFFGIFQGVMPLIGWLTGL, LANFDHWIAFILLAAIGGKMI, LFALAIATSIDALAAGLGLSV, ILLACTLIASITFSLSFIGVF, and ILGGITLIGIGTKILVEGLII.

It belongs to the MntP (TC 9.B.29) family.

It is found in the cell inner membrane. Probably functions as a manganese efflux pump. This is Putative manganese efflux pump MntP from Rippkaea orientalis (strain PCC 8801 / RF-1) (Cyanothece sp. (strain PCC 8801)).